Here is a 172-residue protein sequence, read N- to C-terminus: MSNLLQTGAEFEKKLKERAESTEKMLNNEFRRLGESVSEAVTSNETKIRDAIALFTASTEESLEKHREGVKEAMMQHRRDVLKLAGNTGMMLLGIVFLLFTASGGTLWYLGGRIQANLEEIRKQEETLQKLNAKTWGVEFVQDGNRKFLVLPYGKSAEVIPFQGKEWVHLKE.

To E.coli MbaB and MbkB. As to quaternary structure, interacts with MbeA and MbeC to form the relaxosome.

In terms of biological role, this protein is essential to promote the specific transfer of the plasmid in the presence of conjugative plasmids. In Escherichia coli, this protein is Mobilization protein MbeB (mbeB).